Consider the following 397-residue polypeptide: Chorismate synthase (397 aa).

NADP(+) is bound by residues R40 and R46. FMN contacts are provided by residues 129-131, 257-258, G302, 317-321, and R343; these read RSS, QA, and KPISS.

It belongs to the chorismate synthase family. In terms of assembly, homotetramer. The cofactor is FMNH2.

The enzyme catalyses 5-O-(1-carboxyvinyl)-3-phosphoshikimate = chorismate + phosphate. Its pathway is metabolic intermediate biosynthesis; chorismate biosynthesis; chorismate from D-erythrose 4-phosphate and phosphoenolpyruvate: step 7/7. Functionally, catalyzes the anti-1,4-elimination of the C-3 phosphate and the C-6 proR hydrogen from 5-enolpyruvylshikimate-3-phosphate (EPSP) to yield chorismate, which is the branch point compound that serves as the starting substrate for the three terminal pathways of aromatic amino acid biosynthesis. This reaction introduces a second double bond into the aromatic ring system. The protein is Chorismate synthase of Chlorobium luteolum (strain DSM 273 / BCRC 81028 / 2530) (Pelodictyon luteolum).